A 427-amino-acid polypeptide reads, in one-letter code: 3-phosphoshikimate 1-carboxyvinyltransferase (427 aa).

3 residues coordinate 3-phosphoshikimate: Lys-20, Ser-21, and Arg-25. Lys-20 is a phosphoenolpyruvate binding site. The phosphoenolpyruvate site is built by Gly-92 and Arg-120. 4 residues coordinate 3-phosphoshikimate: Ser-166, Gln-168, Asp-312, and Lys-339. Gln-168 provides a ligand contact to phosphoenolpyruvate. Catalysis depends on Asp-312, which acts as the Proton acceptor. Residues Arg-343 and Arg-385 each contribute to the phosphoenolpyruvate site.

This sequence belongs to the EPSP synthase family. As to quaternary structure, monomer.

The protein resides in the cytoplasm. The catalysed reaction is 3-phosphoshikimate + phosphoenolpyruvate = 5-O-(1-carboxyvinyl)-3-phosphoshikimate + phosphate. It functions in the pathway metabolic intermediate biosynthesis; chorismate biosynthesis; chorismate from D-erythrose 4-phosphate and phosphoenolpyruvate: step 6/7. Catalyzes the transfer of the enolpyruvyl moiety of phosphoenolpyruvate (PEP) to the 5-hydroxyl of shikimate-3-phosphate (S3P) to produce enolpyruvyl shikimate-3-phosphate and inorganic phosphate. The polypeptide is 3-phosphoshikimate 1-carboxyvinyltransferase (Streptococcus thermophilus (strain ATCC BAA-491 / LMD-9)).